The following is a 540-amino-acid chain: Protein PALS2 (540 aa).

L27 domains lie at M1–K48 and L49–P107. The PDZ domain occupies I130–Y209. The SH3 domain occupies P215–K284. The 188-residue stretch at R338–E525 folds into the Guanylate kinase-like domain. Y500 bears the Phosphotyrosine mark.

The protein belongs to the MAGUK family. As to quaternary structure, interacts with CADM1. Interacts with the LIN7 proteins. As to expression, abundant in testis, brain, and kidney with lower levels detectable in other tissues.

The protein localises to the membrane. The chain is Protein PALS2 from Homo sapiens (Human).